The chain runs to 720 residues: MTQQEYRSPSQRLSKGRSMSLPKIFARNLRSLQNNAPPGKNINVNCLNVNSCSLSASPSSQINMACNGNKQDLPIPFPLHVECNDSWSSSKLNKFKSMFNHNRSKSSGTTDASTSEKGTHKREPRSTIHTELLQSSIIGEPNVHSTTSSTLIPNEAICSTPNEISGSSSPDAELFTFDMPTDPSSFHTPSSPSYIAKDSRNLSNGSLNDINENEELQNFHRKISENGSASPLANLSLSNSPIDSPRKNSETRKDQIPMNITPRLRRAASEPFNTAKDGLMREDYIALKQPPSLGDIVEPRRSRRLRTKSFGNKFQDITVEPQSFEKIRLLGQGDVGKVYLVRERDTNQIFALKVLNKHEMIKRKKIKRVLTEQEILATSDHPFIVTLYHSFQTKDYLYLCMEYCMGGEFFRALQTRKSKCIAEEDAKFYASEVVAALEYLHLLGFIYRDLKPENILLHQSGHVMLSDFDLSIQATGSKKPTMKDSTYLDTKICSDGFRTNSFVGTEEYLAPEVIRGNGHTAAVDWWTLGILIYEMLFGCTPFKGDNSNETFSNILTKDVKFPHDKEVSKNCKDLIKKLLNKNEAKRLGSKSGAADIKRHPFFKKVQWSFLRNQDPPLIPALNDNGCELPFILSCNKHPKRNSVSEQETKMFCEKVANDDEIDEADPFHDFNSMSLTKKDHNILTYSENYTYGKILYKATCTRPRHNSSHRSFFKDIIPEL.

Polar residues-rich tracts occupy residues 1–13 and 99–116; these read MTQQEYRSPSQRL and FNHNRSKSSGTTDASTSE. Disordered regions lie at residues 1 to 20 and 99 to 128; these read MTQQEYRSPSQRLSKGRSMS and FNHNRSKSSGTTDASTSEKGTHKREPRSTI. At Ser-203 the chain carries Phosphoserine. Over residues 230–241 the composition is skewed to low complexity; sequence SPLANLSLSNSP. Positions 230-257 are disordered; it reads SPLANLSLSNSPIDSPRKNSETRKDQIP. The span at 244–255 shows a compositional bias: basic and acidic residues; the sequence is SPRKNSETRKDQ. The 279-residue stretch at 324–602 folds into the Protein kinase domain; the sequence is FEKIRLLGQG…AADIKRHPFF (279 aa). ATP contacts are provided by residues 330–338 and Lys-353; that span reads LGQGDVGKV. The active-site Proton acceptor is Asp-449.

Belongs to the protein kinase superfamily. Ser/Thr protein kinase family. KIN82 subfamily.

It carries out the reaction L-seryl-[protein] + ATP = O-phospho-L-seryl-[protein] + ADP + H(+). It catalyses the reaction L-threonyl-[protein] + ATP = O-phospho-L-threonyl-[protein] + ADP + H(+). Functionally, flippase activator that phosphorylates DFN1 and DFN2 and which is involved in the generation of phospholipid asymmetry in membranes by the inward translocation of phospholipids. The sequence is that of Serine/threonine-protein kinase KIN82 (KIN82) from Saccharomyces cerevisiae (strain ATCC 204508 / S288c) (Baker's yeast).